The chain runs to 324 residues: Porphobilinogen deaminase (324 aa).

Cysteine 246 bears the S-(dipyrrolylmethanemethyl)cysteine mark. The interval 261 to 279 is insert; that stretch reads GQAPEEGGRAAASQAPAAL.

The protein belongs to the HMBS family. Monomer. It depends on dipyrromethane as a cofactor.

The enzyme catalyses 4 porphobilinogen + H2O = hydroxymethylbilane + 4 NH4(+). It participates in porphyrin-containing compound metabolism; protoporphyrin-IX biosynthesis; coproporphyrinogen-III from 5-aminolevulinate: step 2/4. Tetrapolymerization of the monopyrrole PBG into the hydroxymethylbilane pre-uroporphyrinogen in several discrete steps. This chain is Porphobilinogen deaminase (hemC), found in Paenibacillus macerans (Bacillus macerans).